The following is a 306-amino-acid chain: Ornithine carbamoyltransferase (306 aa).

Residues 53–56, Q80, R104, and 131–134 each bind carbamoyl phosphate; these read STRT and HPCQ. Residues N162, D219, and 223 to 224 contribute to the L-ornithine site; that span reads SM. Carbamoyl phosphate contacts are provided by residues 259–260 and R287; that span reads CL.

It belongs to the aspartate/ornithine carbamoyltransferase superfamily. OTCase family.

It is found in the cytoplasm. The enzyme catalyses carbamoyl phosphate + L-ornithine = L-citrulline + phosphate + H(+). Its pathway is amino-acid degradation; L-arginine degradation via ADI pathway; carbamoyl phosphate from L-arginine: step 2/2. Its function is as follows. Reversibly catalyzes the transfer of the carbamoyl group from carbamoyl phosphate (CP) to the N(epsilon) atom of ornithine (ORN) to produce L-citrulline. This Acinetobacter baumannii (strain AYE) protein is Ornithine carbamoyltransferase.